Here is a 529-residue protein sequence, read N- to C-terminus: Glucocorticoid modulatory element-binding protein 2 (529 aa).

In terms of domain architecture, SAND spans Glu80–Asp162. Cys109 provides a ligand contact to Zn(2+). DNA is bound by residues Lys135, Lys139, Lys142, and Arg153. Lys154 participates in a covalent cross-link: Glycyl lysine isopeptide (Lys-Gly) (interchain with G-Cter in SUMO1); alternate. A Glycyl lysine isopeptide (Lys-Gly) (interchain with G-Cter in SUMO2); alternate cross-link involves residue Lys154. Zn(2+)-binding residues include His166, Cys170, and Cys174. The stretch at Leu244 to Thr347 forms a coiled coil. Ser372 bears the Phosphoserine mark.

As to quaternary structure, homodimer, and heterodimer of GMEB1 and GMEB2. Interacts with the glucocorticoid receptor (NR3C1). May interact with CREB-binding protein (CBP).

It localises to the nucleus. It is found in the cytoplasm. Trans-acting factor that binds to glucocorticoid modulatory elements (GME) present in the TAT (tyrosine aminotransferase) promoter and increases sensitivity to low concentrations of glucocorticoids. Also binds to the transferrin receptor promoter. The sequence is that of Glucocorticoid modulatory element-binding protein 2 (Gmeb2) from Rattus norvegicus (Rat).